Here is a 323-residue protein sequence, read N- to C-terminus: Lipoyl synthase (323 aa).

[4Fe-4S] cluster contacts are provided by Cys-61, Cys-66, Cys-72, Cys-87, Cys-91, Cys-94, and Ser-300. Positions 73–289 constitute a Radical SAM core domain; the sequence is WDKKHATFMI…ETVAYTKGFL (217 aa).

It belongs to the radical SAM superfamily. Lipoyl synthase family. [4Fe-4S] cluster serves as cofactor.

Its subcellular location is the cytoplasm. It catalyses the reaction [[Fe-S] cluster scaffold protein carrying a second [4Fe-4S](2+) cluster] + N(6)-octanoyl-L-lysyl-[protein] + 2 oxidized [2Fe-2S]-[ferredoxin] + 2 S-adenosyl-L-methionine + 4 H(+) = [[Fe-S] cluster scaffold protein] + N(6)-[(R)-dihydrolipoyl]-L-lysyl-[protein] + 4 Fe(3+) + 2 hydrogen sulfide + 2 5'-deoxyadenosine + 2 L-methionine + 2 reduced [2Fe-2S]-[ferredoxin]. It participates in protein modification; protein lipoylation via endogenous pathway; protein N(6)-(lipoyl)lysine from octanoyl-[acyl-carrier-protein]: step 2/2. Its function is as follows. Catalyzes the radical-mediated insertion of two sulfur atoms into the C-6 and C-8 positions of the octanoyl moiety bound to the lipoyl domains of lipoate-dependent enzymes, thereby converting the octanoylated domains into lipoylated derivatives. The sequence is that of Lipoyl synthase from Sinorhizobium medicae (strain WSM419) (Ensifer medicae).